The following is a 474-amino-acid chain: Calcitonin receptor (474 aa).

Positions 1-24 are cleaved as a signal peptide; it reads MRFTFTSRCLALFLLLNHPTPILP. Residues 25 to 146 lie on the Extracellular side of the membrane; that stretch reads AFSNQTYPTI…FTPEKLKNAY (122 aa). N-linked (GlcNAc...) asparagine glycans are attached at residues asparagine 28, asparagine 73, asparagine 125, and asparagine 130. 3 disulfide bridges follow: cysteine 55–cysteine 81, cysteine 72–cysteine 112, and cysteine 95–cysteine 134. Residues 147-169 form a helical membrane-spanning segment; it reads VLYYLAIVGHSLSIFTLVISLGI. At 170 to 181 the chain is on the cytoplasmic side; the sequence is FVFFRSLGCQRV. A helical membrane pass occupies residues 182-202; it reads TLHKNMFLTYILNSMIIIIHL. Over 203–219 the chain is Extracellular; that stretch reads VEVVPNGELVRRDPVSC. Residues cysteine 219 and cysteine 289 are joined by a disulfide bond. A helical membrane pass occupies residues 220–242; the sequence is KILHFFHQYMMACNYFWMLCEGI. Residues 243–259 lie on the Cytoplasmic side of the membrane; sequence YLHTLIVVAVFTEKQRL. A helical transmembrane segment spans residues 260–280; the sequence is RWYYLLGWGFPLVPTTIHAIT. The Extracellular portion of the chain corresponds to 281 to 296; it reads RAVYFNDNCWLSVETH. The helical transmembrane segment at 297–320 threads the bilayer; that stretch reads LLYIIHGPVMAALVVNFFFLLNIV. Residues 321–340 are Cytoplasmic-facing; that stretch reads RVLVTKMRETHEAESHMYLK. A helical membrane pass occupies residues 341-359; sequence AVKATMILVPLLGIQFVVF. Topologically, residues 360–367 are extracellular; it reads PWRPSNKM. The chain crosses the membrane as a helical span at residues 368 to 394; sequence LGKIYDYVMHSLIHFQGFFVATIYCFC. Residues 395 to 474 lie on the Cytoplasmic side of the membrane; the sequence is NNEVQTTVKR…LNIIEQESSA (80 aa).

The protein belongs to the G-protein coupled receptor 2 family. Heterodimer of CALCR and RAMP1, RAMP2 or RAMP3; the receptor complexes function as AMYR1, AMYR2 and AMYR3 receptors, respectively, and respond to amylin/IAPP, calcitonin/CT and CGRP1 ligands. Interacts with GPRASP2.

The protein localises to the cell membrane. Sensitive to cholera toxin. G protein-coupled receptor activated by ligand peptides amylin (IAPP), calcitonin (CT/CALCA) and calcitonin gene-related peptide type 1 (CGRP1/CALCA). CALCR interacts with receptor-activity-modifying proteins RAMP1, 2 and 3 to form receptor complexes AMYR1, 2 and 3, respectively. IAPP, CT and CGRP1 activate CALCR and AMYRs with distinct modes of receptor activation resulting in specific phenotypes. Ligand binding causes a conformation change that triggers signaling via guanine nucleotide-binding proteins (G proteins) and modulates the activity of downstream effectors. Activates cAMP-dependent pathway. Functionally, non-functional protein. Unable to couple to G proteins and activate adenylyl cyclase. Does not undergo receptor internalization following ligand binding. This is Calcitonin receptor from Homo sapiens (Human).